The primary structure comprises 309 residues: Sulfate adenylyltransferase subunit 2 (309 aa).

This sequence belongs to the PAPS reductase family. CysD subfamily. Heterodimer composed of CysD, the smaller subunit, and CysN.

It catalyses the reaction sulfate + ATP + H(+) = adenosine 5'-phosphosulfate + diphosphate. The protein operates within sulfur metabolism; hydrogen sulfide biosynthesis; sulfite from sulfate: step 1/3. Its function is as follows. With CysN forms the ATP sulfurylase (ATPS) that catalyzes the adenylation of sulfate producing adenosine 5'-phosphosulfate (APS) and diphosphate, the first enzymatic step in sulfur assimilation pathway. APS synthesis involves the formation of a high-energy phosphoric-sulfuric acid anhydride bond driven by GTP hydrolysis by CysN coupled to ATP hydrolysis by CysD. This chain is Sulfate adenylyltransferase subunit 2, found in Mycobacterium bovis (strain ATCC BAA-935 / AF2122/97).